Reading from the N-terminus, the 89-residue chain is Small ribosomal subunit protein uS15 (89 aa).

The span at 1–10 (MAVTTDQKSQ) shows a compositional bias: polar residues. The tract at residues 1–22 (MAVTTDQKSQVMRDYQRAAGDT) is disordered.

The protein belongs to the universal ribosomal protein uS15 family. Part of the 30S ribosomal subunit. Forms a bridge to the 50S subunit in the 70S ribosome, contacting the 23S rRNA.

In terms of biological role, one of the primary rRNA binding proteins, it binds directly to 16S rRNA where it helps nucleate assembly of the platform of the 30S subunit by binding and bridging several RNA helices of the 16S rRNA. Functionally, forms an intersubunit bridge (bridge B4) with the 23S rRNA of the 50S subunit in the ribosome. The chain is Small ribosomal subunit protein uS15 from Nitrosomonas europaea (strain ATCC 19718 / CIP 103999 / KCTC 2705 / NBRC 14298).